Consider the following 69-residue polypeptide: Snake venom metalloproteinase BnP2 (69 aa).

Positions 1–69 constitute a Peptidase M12B domain; the sequence is YIELAVVADH…EWRERDIIPR (69 aa). Glutamate 3 contacts Ca(2+).

The protein belongs to the venom metalloproteinase (M12B) family. P-I subfamily. Monomer. It depends on Zn(2+) as a cofactor. Expressed by the venom gland.

It is found in the secreted. With respect to regulation, inhibited by EDTA. Functionally, this protein is a zinc protease from snake venom that is devoid of significant myotoxic and hemorrhagic activities. It hydrolyzes the Aalpha-chain and more slowly the Bbeta-chain of fibrin and fibrinogen, without affecting the gamma-chains. It induces cell detachment and a apoptosis (anoikis) in endothelial cells. The polypeptide is Snake venom metalloproteinase BnP2 (Bothrops pauloensis (Neuwied's lancehead)).